A 122-amino-acid chain; its full sequence is Ribosome-binding factor A (122 aa).

The protein belongs to the RbfA family. As to quaternary structure, monomer. Binds 30S ribosomal subunits, but not 50S ribosomal subunits or 70S ribosomes.

It is found in the cytoplasm. Its function is as follows. One of several proteins that assist in the late maturation steps of the functional core of the 30S ribosomal subunit. Associates with free 30S ribosomal subunits (but not with 30S subunits that are part of 70S ribosomes or polysomes). Required for efficient processing of 16S rRNA. May interact with the 5'-terminal helix region of 16S rRNA. This Cupriavidus necator (strain ATCC 17699 / DSM 428 / KCTC 22496 / NCIMB 10442 / H16 / Stanier 337) (Ralstonia eutropha) protein is Ribosome-binding factor A.